We begin with the raw amino-acid sequence, 176 residues long: Tubulin polymerization-promoting protein family member 3 (176 aa).

A2 bears the N-acetylalanine mark. Residues 132–152 are disordered; sequence TGSHKERFDESGKGKGIAGRQ. The segment covering 134–144 has biased composition (basic and acidic residues); it reads SHKERFDESGK.

It belongs to the TPPP family.

The protein resides in the cytoplasm. It localises to the cytoskeleton. Functionally, regulator of microtubule dynamic that has microtubule bundling activity. Required for embryo implantation; possibly by regulating beta-catenin. Also required for decidualization via regulation of beta-catenin. This Mus musculus (Mouse) protein is Tubulin polymerization-promoting protein family member 3.